A 181-amino-acid chain; its full sequence is Crustacyanin-C1 subunit (181 aa).

3 disulfide bridges follow: cysteine 12-cysteine 121, cysteine 51-cysteine 173, and cysteine 117-cysteine 150.

It belongs to the calycin superfamily. Lipocalin family. In terms of assembly, oligomer; Can form dimers (beta-crustacyanin); or complexes of 16 subunits (alpha-crustacyanin). There are five types of subunits: A1, A2, A3, C1 and C2. As to expression, found in the carapace.

It localises to the secreted. The protein resides in the extracellular space. In terms of biological role, binds the carotenoid astaxanthin (AXT) which provides the blue coloration to the carapace of the lobster. This is Crustacyanin-C1 subunit from Homarus gammarus (European lobster).